Consider the following 913-residue polypeptide: DNA repair endonuclease XPF (913 aa).

Residues 1-454 (MDRGISAVRK…EVWVNLRKGD (454 aa)) are helicase-like. Leucine-zipper regions lie at residues 233 to 254 (LNACLKELKCHNPSLEVEDLSL) and 270 to 298 (LDPLWHQLGAKTKSLVQDLKILRTLLQYL). K289 carries the post-translational modification N6-acetyllysine. Over residues 453 to 476 (GDGPKRTMKSDKRPKDTKNKERAS) the composition is skewed to basic and acidic residues. Disordered regions lie at residues 453 to 525 (GDGP…CGGE) and 638 to 677 (VVPEEREGRDETNLDLARGTVSTDAPADTRKAGGQEHNGT). The Nuclear localization signal motif lies at 483-488 (KRKKRE). The segment covering 500-509 (EPPEEGAAEE) has biased composition (acidic residues). S518 bears the Phosphoserine mark. Over residues 638 to 649 (VVPEEREGRDET) the composition is skewed to basic and acidic residues. A nuclease region spans residues 655 to 810 (RGTVSTDAPA…PSPHATAELF (156 aa)). Residues 680–760 (SIVVDMREFR…RPVLLIEFDA (81 aa)) form the ERCC4 domain. Residues 834 to 902 (TLPESDKYNP…QLYDFLHTAY (69 aa)) form a hhH2, dimerization with ERCC1 region.

The protein belongs to the XPF family. In terms of assembly, heterodimer composed of ERCC1 and ERCC4/XPF. Interacts with SLX4/BTBD12; this interaction is direct and links the ERCC1-ERCC4/XPF complex to SLX4, which may coordinate the action of the structure-specific endonuclease during DNA repair. Mg(2+) serves as cofactor.

The protein resides in the nucleus. It is found in the chromosome. Catalytic component of a structure-specific DNA repair endonuclease responsible for the 5-prime incision during DNA repair, and which is essential for nucleotide excision repair (NER) and interstrand cross-link (ICL) repair. The protein is DNA repair endonuclease XPF of Cricetulus griseus (Chinese hamster).